Here is a 342-residue protein sequence, read N- to C-terminus: Anthranilate phosphoribosyltransferase (342 aa).

Residues Gly81, 84–85 (GD), Thr89, 91–94 (NIST), 109–117 (KHGNRALSS), and Thr121 contribute to the 5-phospho-alpha-D-ribose 1-diphosphate site. Residue Gly81 participates in anthranilate binding. Ser93 is a binding site for Mg(2+). Anthranilate is bound at residue Asn112. Arg167 serves as a coordination point for anthranilate. Mg(2+) contacts are provided by Asp225 and Glu226.

This sequence belongs to the anthranilate phosphoribosyltransferase family. As to quaternary structure, homodimer. The cofactor is Mg(2+).

It carries out the reaction N-(5-phospho-beta-D-ribosyl)anthranilate + diphosphate = 5-phospho-alpha-D-ribose 1-diphosphate + anthranilate. It participates in amino-acid biosynthesis; L-tryptophan biosynthesis; L-tryptophan from chorismate: step 2/5. In terms of biological role, catalyzes the transfer of the phosphoribosyl group of 5-phosphorylribose-1-pyrophosphate (PRPP) to anthranilate to yield N-(5'-phosphoribosyl)-anthranilate (PRA). The protein is Anthranilate phosphoribosyltransferase of Agrobacterium fabrum (strain C58 / ATCC 33970) (Agrobacterium tumefaciens (strain C58)).